The chain runs to 288 residues: 3-methyl-2-oxobutanoate hydroxymethyltransferase (288 aa).

Mg(2+) is bound by residues Asp48 and Asp87. Residues 48-49, Asp87, and Lys116 contribute to the 3-methyl-2-oxobutanoate site; that span reads DS. Glu118 lines the Mg(2+) pocket. Glu185 serves as the catalytic Proton acceptor.

It belongs to the PanB family. Homodecamer; pentamer of dimers. It depends on Mg(2+) as a cofactor.

The protein localises to the cytoplasm. It carries out the reaction 3-methyl-2-oxobutanoate + (6R)-5,10-methylene-5,6,7,8-tetrahydrofolate + H2O = 2-dehydropantoate + (6S)-5,6,7,8-tetrahydrofolate. It participates in cofactor biosynthesis; coenzyme A biosynthesis. In terms of biological role, catalyzes the reversible reaction in which hydroxymethyl group from 5,10-methylenetetrahydrofolate is transferred onto alpha-ketoisovalerate to form ketopantoate. This Hyperthermus butylicus (strain DSM 5456 / JCM 9403 / PLM1-5) protein is 3-methyl-2-oxobutanoate hydroxymethyltransferase.